A 337-amino-acid polypeptide reads, in one-letter code: Glyceraldehyde-3-phosphate dehydrogenase (337 aa).

NAD(+) is bound by residues 12–13, Asp34, and Lys79; that span reads RI. Residues 150–152, Thr181, 210–211, and Arg233 contribute to the D-glyceraldehyde 3-phosphate site; these read SCT and TG. The active-site Nucleophile is Cys151. Asn315 serves as a coordination point for NAD(+).

This sequence belongs to the glyceraldehyde-3-phosphate dehydrogenase family. As to quaternary structure, homotetramer. As to expression, expressed in all tissues examined.

Its subcellular location is the cytoplasm. The catalysed reaction is D-glyceraldehyde 3-phosphate + phosphate + NAD(+) = (2R)-3-phospho-glyceroyl phosphate + NADH + H(+). It functions in the pathway carbohydrate degradation; glycolysis; pyruvate from D-glyceraldehyde 3-phosphate: step 1/5. The sequence is that of Glyceraldehyde-3-phosphate dehydrogenase (gpd) from Lentinula edodes (Shiitake mushroom).